A 72-amino-acid chain; its full sequence is Large ribosomal subunit protein eL40 (72 aa).

It belongs to the eukaryotic ribosomal protein eL40 family.

The polypeptide is Large ribosomal subunit protein eL40 (Nicotiana tabacum (Common tobacco)).